A 219-amino-acid polypeptide reads, in one-letter code: Endo-type membrane-bound lytic murein transglycosylase A-like protein (219 aa).

It belongs to the transglycosylase Slt family.

The enzyme catalyses Endolytic cleavage of the (1-&gt;4)-beta-glycosidic linkage between N-acetylmuramic acid (MurNAc) and N-acetylglucosamine (GlcNAc) residues in peptidoglycan with concomitant formation of a 1,6-anhydrobond in the MurNAc residue.. In terms of biological role, murein-degrading enzyme. May play a role in recycling of muropeptides during cell elongation and/or cell division (Potential). This Shigella flexneri protein is Endo-type membrane-bound lytic murein transglycosylase A-like protein.